The sequence spans 629 residues: Coiled-coil domain-containing protein 120 (629 aa).

An involved in CYTH2-binding region spans residues 31–70 (RLRGLLDRQRALQEALSVKLQELRKVCLQEAELTGQLPPE). Residues 109–173 (ELALEALERE…LRDFRARLGL (65 aa)) adopt a coiled-coil conformation. Composition is skewed to low complexity over residues 209–219 (HSESSSLSESG) and 279–294 (ASPTSPTRSLPRSASS). Positions 209–356 (HSESSSLSES…LFAARTRRSN (148 aa)) are disordered. The segment covering 323–332 (RQWSGSQDSQ) has biased composition (polar residues). 2 positions are modified to phosphoserine: Ser355 and Ser357. 2 disordered regions span residues 399–432 (QPVPSFSSRTTGPPDPPRAARPSSAAPASRGAPR) and 602–629 (PSQAPLPHSRSFTAPPVSGRYGGAFTDG). Residues 418–432 (ARPSSAAPASRGAPR) are compositionally biased toward low complexity. An Omega-N-methylarginine modification is found at Arg432.

Interacts with NIN and CEP170; leading to recruit them to centrosomes. Interacts with CYTH2; this interaction is direct and stabilizes CCDC120, possibly by preventing ubiquitination. In terms of processing, ubiquitinated; interaction with CYTH2 may prevent ubiquitination.

The protein resides in the cytoplasm. It is found in the cytoskeleton. Its subcellular location is the microtubule organizing center. The protein localises to the centrosome. It localises to the centriole. The protein resides in the cell projection. It is found in the neuron projection. Its subcellular location is the growth cone. The protein localises to the endosome. Its function is as follows. Centriolar protein required for centriole subdistal appendage assembly and microtubule anchoring in interphase cells. Together with CCDC68, cooperate with subdistal appendage components ODF2, NIN and CEP170 for hierarchical subdistal appendage assembly. Recruits NIN and CEP170 to centrosomes. Also required for neurite growth. Localizes CYTH2 to vesicles to allow its transport along neurites, and subsequent ARF6 activation and neurite growth. This Mus musculus (Mouse) protein is Coiled-coil domain-containing protein 120.